The sequence spans 576 residues: uncharacterized protein (576 aa).

2 stretches are compositionally biased toward polar residues: residues 1–21 and 28–40; these read MSTNPNAGIQPLTNSISQSAS and HTTSHESVSTYQL. Residues 1-40 are disordered; sequence MSTNPNAGIQPLTNSISQSASAHPELYHTTSHESVSTYQL. 12 consecutive transmembrane segments (helical) span residues 149-169, 173-193, 200-220, 231-251, 261-281, 291-311, 366-386, 401-421, 446-466, 472-492, 503-525, and 542-562; these read FASSVFSVPAEAITTIFHISL, LLTMTVFLCGYIAGPIVWAPL, KLPLLIGMFGFGIFNISVAVA, FFSGFFASAPLTVVAAAFADM, ITIFAALVFDGPLVSPIIGGF, WTEYITSFMGFFALVIVYLFC, PIVFLITLYSSFVYAILYLLL, MGVAELPYIGLLVGVFIGSAI, LPPMMIGCFMFPAGIFWLSWS, VHWIVPTLSGLATGCGILLIF, YLFRAASAVAANTIMRSAMAAGF, and GSLLGFIAVALIPMPFAFFFF.

The protein belongs to the major facilitator superfamily. CAR1 family.

It is found in the endoplasmic reticulum. The protein resides in the golgi apparatus. It localises to the membrane. This is an uncharacterized protein from Schizosaccharomyces pombe (strain 972 / ATCC 24843) (Fission yeast).